A 156-amino-acid chain; its full sequence is CYICHSLKYDRIYSNKNSLCYVFLIWTLTLIAIMPNLQTGTLQYDPRIYSCTFTQSVSSAYTIALVVFHFVVPMIIVTFCYLRIWILVLQVRRRVKPDSKPKLKPQDFRNFVTMFVVFVLFALCWAPLNFIGLIVASDPATMAPRIPEWLFVASYY.

3 consecutive transmembrane segments (helical) span residues 19–39 (LCYV…NLQT), 62–82 (TIAL…FCYL), and 115–135 (FVVF…GLIV).

It belongs to the G-protein coupled receptor 1 family. At least in the brain, more precisely in the pars tuberalis and the suprachiasmatic nucleus.

The protein localises to the cell membrane. Its function is as follows. High affinity receptor for melatonin. Likely to mediate the reproductive and circadian actions of melatonin. The activity of this receptor is mediated by pertussis toxin sensitive G proteins that inhibit adenylate cyclase activity. Possibly involved in sleep induction, by melatonin activation of the potassium channel KCNMA1/BK and the dissociation of G-beta and G-gamma subunits, thereby decreasing synaptic transmission. The chain is Melatonin receptor type 1A (Mtnr1a) from Rattus norvegicus (Rat).